We begin with the raw amino-acid sequence, 509 residues long: Subtelomeric hrmA-associated cluster protein AFUB_078990 (509 aa).

Its function is as follows. Part of the subtelomeric hrmA-associated cluster (HAC) containing genes that alter the hyphal surface (such as reduced total chitin or increased beta-glucan exposure) and perturb inter-hyphal interactions within the developing biofilms, resulting in a loss of vertically aligned polarized growing filaments. Consequently, this hypoxia-typic morphotype (called H-MORPH) with altered biofilm architecture leads to increased hypoxia fitness, increased host inflammation, rapid disease progression, and mortality in a murine model of invasive aspergillosis. This is Subtelomeric hrmA-associated cluster protein AFUB_078990 from Aspergillus fumigatus (strain CBS 144.89 / FGSC A1163 / CEA10) (Neosartorya fumigata).